A 606-amino-acid polypeptide reads, in one-letter code: DNA mismatch repair protein MutL (606 aa).

Residues 377-401 (HRPLFAPQPAPQPDREPPLPDSGSR) form a disordered region.

This sequence belongs to the DNA mismatch repair MutL/HexB family.

Functionally, this protein is involved in the repair of mismatches in DNA. It is required for dam-dependent methyl-directed DNA mismatch repair. May act as a 'molecular matchmaker', a protein that promotes the formation of a stable complex between two or more DNA-binding proteins in an ATP-dependent manner without itself being part of a final effector complex. The chain is DNA mismatch repair protein MutL from Geobacter sulfurreducens (strain ATCC 51573 / DSM 12127 / PCA).